Reading from the N-terminus, the 228-residue chain is Glycerol-3-phosphate acyltransferase (228 aa).

6 consecutive transmembrane segments (helical) span residues 1-21 (MINWLVLNAVILIVAYLLGAT), 56-76 (VPALVVLVIDIFKGALAIALV), 104-124 (MVIIAGLIAIVGHTKSIWIGF), 136-156 (ILLAISWVVGLGTLSVFIVVL), 161-181 (IVSLSSIIAAISVSGLMFFTG), and 183-203 (PLPYQIFAITGGIYVIWRHIS).

The protein belongs to the PlsY family. Probably interacts with PlsX.

The protein localises to the cell inner membrane. It catalyses the reaction an acyl phosphate + sn-glycerol 3-phosphate = a 1-acyl-sn-glycero-3-phosphate + phosphate. It participates in lipid metabolism; phospholipid metabolism. Functionally, catalyzes the transfer of an acyl group from acyl-phosphate (acyl-PO(4)) to glycerol-3-phosphate (G3P) to form lysophosphatidic acid (LPA). This enzyme utilizes acyl-phosphate as fatty acyl donor, but not acyl-CoA or acyl-ACP. The polypeptide is Glycerol-3-phosphate acyltransferase (Trichodesmium erythraeum (strain IMS101)).